We begin with the raw amino-acid sequence, 204 residues long: Ribosomal RNA small subunit methyltransferase G (204 aa).

Gly73, Phe78, and Arg139 together coordinate S-adenosyl-L-methionine.

Belongs to the methyltransferase superfamily. RNA methyltransferase RsmG family.

Its subcellular location is the cytoplasm. The enzyme catalyses guanosine(527) in 16S rRNA + S-adenosyl-L-methionine = N(7)-methylguanosine(527) in 16S rRNA + S-adenosyl-L-homocysteine. Specifically methylates the N7 position of guanine in position 527 of 16S rRNA. This is Ribosomal RNA small subunit methyltransferase G from Coxiella burnetii (strain RSA 331 / Henzerling II).